Consider the following 264-residue polypeptide: Cell division protein FtsQ (264 aa).

Residues 1–24 (MAGPTTAERGDRQQESSGPPPARW) form a disordered region. Topologically, residues 1 to 31 (MAGPTTAERGDRQQESSGPPPARWSGTRRLR) are cytoplasmic. The helical transmembrane segment at 32 to 52 (ALVVLAALLVLLAGGCAWLLY) threads the bilayer. Residues 53–264 (GSSWLRLERV…VPTAPASSGS (212 aa)) lie on the Extracellular side of the membrane. The POTRA domain maps to 57–126 (LRLERVSVSG…HGIGLKVTER (70 aa)).

Belongs to the FtsQ/DivIB family. FtsQ subfamily.

The protein resides in the cell membrane. Functionally, essential cell division protein. This is Cell division protein FtsQ from Streptomyces collinus.